The primary structure comprises 623 residues: MPHSDELDAGNVLAVENLNIAFMQDQQKIAAVRNLSFSLQRGETLAIVGESGSGKSVTALALMRLLEQAGGLVQCDKMLLQRRSREVIELSEQNAAQMRHVRGADMAMIFQEPMTSLNPVFTVGEQIAESIRLHQNASREEAMVEAKRMLDQVRIPEAQTILSRYPHQLSGGMRQRVMIAMALSCRPAVLIADEPTTALDVTIQAQILQLIKVLQKEMSMGVIFITHDMGVVAEIADRVLVMYQGEAVETGTVEQIFHAPQHPYTRALLAAVPQLGAMKGLDYPRRFPLISLEHPAKQAPPIEQKTVVDGEPVLRVRNLVTRFPLRSGLLNRVTREVHAVEKVSFDLWPGETLSLVGESGSGKSTTGRALLRLVESQGGEIIFNGQRIDTLSPGKLQALRRDIQFIFQDPYASLDPRQTIGDSIIEPLRVHGLLPGKDAAARVAWLLERVGLLPEHAWRYPHEFSGGQRQRICIARALALNPKVIIADEAVSALDVSIRGQIINLLLDLQRDFGIAYLFISHDMAVVERISHRVAVMYLGQIVEIGPRRAVFENPQHPYTRKLLAAVPVAEPSRQRPQRVLLSDDLPSNIHLRGEEVAAVSLQCVGPGHYVAQPQSEYAFMRR.

ABC transporter domains follow at residues 15–269 and 314–564; these read VENL…RALL and LRVR…RKLL. ATP contacts are provided by residues 49–56 and 357–364; these read GESGSGKS.

Belongs to the ABC transporter superfamily. Glutathione importer (TC 3.A.1.5.11) family. As to quaternary structure, the complex is composed of two ATP-binding proteins (GsiA), two transmembrane proteins (GsiC and GsiD) and a solute-binding protein (GsiB).

The protein resides in the cell inner membrane. It catalyses the reaction glutathione(out) + ATP + H2O = glutathione(in) + ADP + phosphate + H(+). Inhibited by verapamil but not by carbonyl cyanide m-chlorophenylhydrazone (CCCP). In terms of biological role, part of the ABC transporter complex GsiABCD involved in glutathione import. Responsible for energy coupling to the transport system. The chain is Glutathione import ATP-binding protein GsiA from Escherichia coli (strain K12).